A 369-amino-acid chain; its full sequence is MIALLIGAGLALLFALVGTPLFIRLLVRKSYGQFIRDDGPTSHHTKRGTPTMGGTVVVFAVLLSYALTHLIMWMMNPRSPGPSASALLLLFLMVGMGLVGFLDDFIKISKQRSLGLDAKAKLVLQGAVGIIFAILALNFPNADGVTPASTQISLVRDIPWLNLAFGGTVLGAILFVLWSNLIVTAATNGVNLTDGLDGLAAGASVMVFGAYTLMGIWQSNQACGSPRQTGGGCYSVRDPLDLALLAAILSAALVGFLWWNTSPAKIFMGDTGSLAIGGAVAGFAILSRTELLLAFIGGLFVLITLSVIIQVGYFKITKGKRFFKMAPLQHHFELKGWAEVTVVVRFWILGGLFVAAGLGIFYAEWVVLL.

Helical transmembrane passes span 2 to 22 (IALL…TPLF), 55 to 75 (TVVV…MWMM), 86 to 106 (ALLL…DDFI), 122 to 142 (LVLQ…FPNA), 158 to 178 (IPWL…FVLW), 196 to 216 (LDGL…LMGI), 239 to 259 (PLDL…FLWW), 266 to 286 (IFMG…FAIL), 291 to 311 (LLLA…IIQV), and 348 to 368 (ILGG…WVVL).

It belongs to the glycosyltransferase 4 family. MraY subfamily. Mg(2+) serves as cofactor.

It localises to the cell membrane. The enzyme catalyses UDP-N-acetyl-alpha-D-muramoyl-L-alanyl-gamma-D-glutamyl-meso-2,6-diaminopimeloyl-D-alanyl-D-alanine + di-trans,octa-cis-undecaprenyl phosphate = di-trans,octa-cis-undecaprenyl diphospho-N-acetyl-alpha-D-muramoyl-L-alanyl-D-glutamyl-meso-2,6-diaminopimeloyl-D-alanyl-D-alanine + UMP. Its pathway is cell wall biogenesis; peptidoglycan biosynthesis. Its function is as follows. Catalyzes the initial step of the lipid cycle reactions in the biosynthesis of the cell wall peptidoglycan: transfers peptidoglycan precursor phospho-MurNAc-pentapeptide from UDP-MurNAc-pentapeptide onto the lipid carrier undecaprenyl phosphate, yielding undecaprenyl-pyrophosphoryl-MurNAc-pentapeptide, known as lipid I. The chain is Phospho-N-acetylmuramoyl-pentapeptide-transferase from Arthrobacter sp. (strain FB24).